Reading from the N-terminus, the 120-residue chain is Seripauperin-6 (120 aa).

The first 20 residues, 1 to 20, serve as a signal peptide directing secretion; sequence MVKLTSIAAGVAAIAATASA.

Belongs to the SRP1/TIP1 family. Seripauperin subfamily.

The chain is Seripauperin-6 (PAU6) from Saccharomyces cerevisiae (strain ATCC 204508 / S288c) (Baker's yeast).